Consider the following 120-residue polypeptide: MNRIMLLAKIHRATVTEADLHYEGSCGIDEDLLDAANMREFEKIELYNINNGNRFSTYIIKAVRGSGIISLNGAAARKAHVGDHLIICTYGSVPDAEVNNHVPKIVLVGDNNSIKEIKKI.

Catalysis depends on Ser25, which acts as the Schiff-base intermediate with substrate; via pyruvic acid. Ser25 carries the post-translational modification Pyruvic acid (Ser). Thr57 provides a ligand contact to substrate. The active-site Proton donor is the Tyr58. Gly73–Ala75 provides a ligand contact to substrate.

It belongs to the PanD family. As to quaternary structure, heterooctamer of four alpha and four beta subunits. Pyruvate serves as cofactor. Is synthesized initially as an inactive proenzyme, which is activated by self-cleavage at a specific serine bond to produce a beta-subunit with a hydroxyl group at its C-terminus and an alpha-subunit with a pyruvoyl group at its N-terminus.

The protein localises to the cytoplasm. The catalysed reaction is L-aspartate + H(+) = beta-alanine + CO2. Its pathway is cofactor biosynthesis; (R)-pantothenate biosynthesis; beta-alanine from L-aspartate: step 1/1. In terms of biological role, catalyzes the pyruvoyl-dependent decarboxylation of aspartate to produce beta-alanine. The sequence is that of Aspartate 1-decarboxylase from Polynucleobacter asymbioticus (strain DSM 18221 / CIP 109841 / QLW-P1DMWA-1) (Polynucleobacter necessarius subsp. asymbioticus).